A 269-amino-acid chain; its full sequence is Protein NETWORKED 3A (269 aa).

One can recognise an NAB domain in the interval Ser6–Ser87. The segment at Ser87–Cys113 is disordered. The segment covering His91–Thr103 has biased composition (basic and acidic residues). The stretch at Asn155 to Thr214 forms a coiled coil.

Belongs to the NET family.

It is found in the cytoplasm. The protein localises to the cytoskeleton. Its subcellular location is the nucleus membrane. Its function is as follows. Plant-specific actin binding protein. May be part of a membrane-cytoskeletal adapter complex. This is Protein NETWORKED 3A from Arabidopsis thaliana (Mouse-ear cress).